The primary structure comprises 510 residues: Major facilitator superfamily domain-containing protein 4A (510 aa).

Transmembrane regions (helical) follow at residues 19 to 39 (LTYW…GPTL), 53 to 73 (ISWV…LGGV), 82 to 102 (LWAL…IPFC), 107 to 127 (VLAS…TVAN), 139 to 159 (AFFL…SPLI), 218 to 238 (YAFW…LFLL), 303 to 323 (FFAI…MMGA), 345 to 365 (GYLP…SIPV), 380 to 400 (VGVV…IFLF), 401 to 421 (VGTA…LAYT), 434 to 454 (VLVT…GLIF), and 462 to 482 (FLVC…LLLF).

Belongs to the major facilitator superfamily.

Its subcellular location is the membrane. The protein is Major facilitator superfamily domain-containing protein 4A of Mus musculus (Mouse).